Reading from the N-terminus, the 1160-residue chain is Protein translocase subunit SecA (1160 aa).

Residues Gln-162 and 180-184 (GEGKT) contribute to the ATP site. The segment at 342-362 (LLEEKEEAEEEGDSRRAQELE) is disordered. Positions 344-353 (EEKEEAEEEG) are enriched in acidic residues. Residue Asp-726 coordinates ATP. The disordered stretch occupies residues 1060-1134 (EVQTEGQGPR…RNEYVTVRNN (75 aa)). The span at 1074-1083 (QRNAQTQHDS) shows a compositional bias: polar residues. Over residues 1104-1115 (AAERDPTVEEKQ) the composition is skewed to basic and acidic residues.

This sequence belongs to the SecA family. As to quaternary structure, monomer and homodimer. Part of the essential Sec protein translocation apparatus which comprises SecA, SecYEG and auxiliary proteins SecDF. Other proteins may also be involved.

It is found in the cell inner membrane. The protein resides in the cytoplasm. The enzyme catalyses ATP + H2O + cellular proteinSide 1 = ADP + phosphate + cellular proteinSide 2.. Part of the Sec protein translocase complex. Interacts with the SecYEG preprotein conducting channel. Has a central role in coupling the hydrolysis of ATP to the transfer of proteins into and across the cell membrane, serving as an ATP-driven molecular motor driving the stepwise translocation of polypeptide chains across the membrane. The protein is Protein translocase subunit SecA of Salinibacter ruber (strain DSM 13855 / M31).